The chain runs to 494 residues: Probable cytochrome P450 515A1 (494 aa).

A helical transmembrane segment spans residues methionine 1 to phenylalanine 21. Cysteine 440 is a binding site for heme.

The protein belongs to the cytochrome P450 family. Requires heme as cofactor.

Its subcellular location is the membrane. The polypeptide is Probable cytochrome P450 515A1 (cyp515A1) (Dictyostelium discoideum (Social amoeba)).